Reading from the N-terminus, the 93-residue chain is UPF0358 protein BPUM_1375 (93 aa).

The protein belongs to the UPF0358 family.

The sequence is that of UPF0358 protein BPUM_1375 from Bacillus pumilus (strain SAFR-032).